Reading from the N-terminus, the 61-residue chain is MGMRMMFTVFLLVVLATTVVSFTSDRASDGGNAAASDLIALTIKGCCSRPPCALSNPDYCG.

The first 21 residues, 1–21 (MGMRMMFTVFLLVVLATTVVS), serve as a signal peptide directing secretion. A propeptide spanning residues 22 to 44 (FTSDRASDGGNAAASDLIALTIK) is cleaved from the precursor. 2 disulfides stabilise this stretch: Cys-46/Cys-52 and Cys-47/Cys-60. The tract at residues 48 to 50 (SRP) is ser-Xaa-Pro motif, crucial for potent interaction with nAChR. Cysteine amide is present on Cys-60.

This sequence belongs to the conotoxin A superfamily. As to expression, expressed by the venom duct.

It localises to the secreted. Alpha-conotoxins act on postsynaptic membranes, they bind to the nicotinic acetylcholine receptors (nAChR) and thus inhibit them. This toxin blocks mammalian nAChRs (alpha-7 &gt; alpha-3/beta-2). The polypeptide is Alpha-conotoxin-like PnMGMR-02 (Conus pennaceus (Feathered cone)).